Here is a 359-residue protein sequence, read N- to C-terminus: 3-dehydroquinate synthase (359 aa).

NAD(+)-binding positions include 71–76 (DGEAHK), 105–109 (GVIGD), 129–130 (TT), Lys-142, Lys-151, and 169–172 (TLHT). Glu-184, His-247, and His-264 together coordinate Zn(2+).

It belongs to the sugar phosphate cyclases superfamily. Dehydroquinate synthase family. NAD(+) is required as a cofactor. The cofactor is Co(2+). Requires Zn(2+) as cofactor.

It localises to the cytoplasm. The enzyme catalyses 7-phospho-2-dehydro-3-deoxy-D-arabino-heptonate = 3-dehydroquinate + phosphate. Its pathway is metabolic intermediate biosynthesis; chorismate biosynthesis; chorismate from D-erythrose 4-phosphate and phosphoenolpyruvate: step 2/7. In terms of biological role, catalyzes the conversion of 3-deoxy-D-arabino-heptulosonate 7-phosphate (DAHP) to dehydroquinate (DHQ). The sequence is that of 3-dehydroquinate synthase from Neisseria meningitidis serogroup A / serotype 4A (strain DSM 15465 / Z2491).